We begin with the raw amino-acid sequence, 159 residues long: Putative 4-hydroxy-4-methyl-2-oxoglutarate aldolase (159 aa).

Substrate contacts are provided by residues G75 to L78 and R97. D98 lines the a divalent metal cation pocket.

Belongs to the class II aldolase/RraA-like family. As to quaternary structure, homotrimer. The cofactor is a divalent metal cation.

The catalysed reaction is 4-hydroxy-4-methyl-2-oxoglutarate = 2 pyruvate. The enzyme catalyses oxaloacetate + H(+) = pyruvate + CO2. In terms of biological role, catalyzes the aldol cleavage of 4-hydroxy-4-methyl-2-oxoglutarate (HMG) into 2 molecules of pyruvate. Also contains a secondary oxaloacetate (OAA) decarboxylase activity due to the common pyruvate enolate transition state formed following C-C bond cleavage in the retro-aldol and decarboxylation reactions. In Laribacter hongkongensis (strain HLHK9), this protein is Putative 4-hydroxy-4-methyl-2-oxoglutarate aldolase.